A 230-amino-acid polypeptide reads, in one-letter code: Small ribosomal subunit protein uS3 (230 aa).

A KH type-2 domain is found at 43–95 (VNRVIIYSARPKMISEERKAHLAKLLELKFGLEKPVIEVLPIENPNLDAHVIA).

Belongs to the universal ribosomal protein uS3 family. Part of the 30S ribosomal subunit.

Functionally, binds the lower part of the 30S subunit head. This chain is Small ribosomal subunit protein uS3, found in Nanoarchaeum equitans (strain Kin4-M).